A 271-amino-acid chain; its full sequence is Zinc finger CCHC domain-containing protein 9 (271 aa).

The disordered stretch occupies residues 1–40; sequence MTRWARVSTTYNKRPLPATSWEDMKKGSFEGTSQNLPKRK. Phosphoserine is present on serine 48. 4 CCHC-type zinc fingers span residues 128–145, 155–172, 184–201, and 211–228; these read MVCF…DCPA, GICY…KCKA, AKCF…SCPD, and GGCK…DCPE.

The protein localises to the nucleus. Its subcellular location is the nucleolus. Functionally, may down-regulate transcription mediated by NF-kappa-B and the serum response element. This is Zinc finger CCHC domain-containing protein 9 (ZCCHC9) from Homo sapiens (Human).